The primary structure comprises 83 residues: Cytochrome c oxidase subunit 7A2, mitochondrial (83 aa).

A mitochondrion-targeting transit peptide spans Met-1–Gln-23. Residues Phe-24–Gly-48 are Mitochondrial matrix-facing. An N6-acetyllysine modification is found at Lys-33. The chain crosses the membrane as a helical span at residues Ile-49–Ser-77. Topologically, residues Phe-78–Asp-83 are mitochondrial intermembrane.

This sequence belongs to the cytochrome c oxidase VIIa family. In terms of assembly, component of the cytochrome c oxidase (complex IV, CIV), a multisubunit enzyme composed of 14 subunits. The complex is composed of a catalytic core of 3 subunits MT-CO1, MT-CO2 and MT-CO3, encoded in the mitochondrial DNA, and 11 supernumerary subunits COX4I1 (or COX4I2), COX5A, COX5B, COX6A2 (or COX6A1), COX6B1 (or COX6B2), COX6C, COX7A1 (or COX7A2), COX7B, COX7C, COX8B and NDUFA4, which are encoded in the nuclear genome. The complex exists as a monomer or a dimer and forms supercomplexes (SCs) in the inner mitochondrial membrane with NADH-ubiquinone oxidoreductase (complex I, CI) and ubiquinol-cytochrome c oxidoreductase (cytochrome b-c1 complex, complex III, CIII), resulting in different assemblies (supercomplex SCI(1)III(2)IV(1) and megacomplex MCI(2)III(2)IV(2)). Interacts with PET100.

The protein localises to the mitochondrion inner membrane. It functions in the pathway energy metabolism; oxidative phosphorylation. Functionally, component of the cytochrome c oxidase, the last enzyme in the mitochondrial electron transport chain which drives oxidative phosphorylation. The respiratory chain contains 3 multisubunit complexes succinate dehydrogenase (complex II, CII), ubiquinol-cytochrome c oxidoreductase (cytochrome b-c1 complex, complex III, CIII) and cytochrome c oxidase (complex IV, CIV), that cooperate to transfer electrons derived from NADH and succinate to molecular oxygen, creating an electrochemical gradient over the inner membrane that drives transmembrane transport and the ATP synthase. Cytochrome c oxidase is the component of the respiratory chain that catalyzes the reduction of oxygen to water. Electrons originating from reduced cytochrome c in the intermembrane space (IMS) are transferred via the dinuclear copper A center (CU(A)) of subunit 2 and heme A of subunit 1 to the active site in subunit 1, a binuclear center (BNC) formed by heme A3 and copper B (CU(B)). The BNC reduces molecular oxygen to 2 water molecules using 4 electrons from cytochrome c in the IMS and 4 protons from the mitochondrial matrix. This Bos taurus (Bovine) protein is Cytochrome c oxidase subunit 7A2, mitochondrial (COX7A2).